A 177-amino-acid polypeptide reads, in one-letter code: MSVATNPNHAGADREVGTQALNRELQDKGFLVTSSEDIINWARTGSLHWMTFGLACCAVEMMHTSMPRYDAERFGIAPRASPRQSDVMIVAGTLTNKMAPALRKVYDQMPEPRYVISMGSCANGGGYYHYSYSVVRGCDRIVPVDIYVPGCPPTAEALLYGILQLQRKIRRTGTIAR.

[4Fe-4S] cluster contacts are provided by Cys-56, Cys-57, Cys-121, and Cys-151.

The protein belongs to the complex I 20 kDa subunit family. NDH-1 is composed of 14 different subunits. Subunits NuoB, C, D, E, F, and G constitute the peripheral sector of the complex. Requires [4Fe-4S] cluster as cofactor.

It localises to the cell inner membrane. It carries out the reaction a quinone + NADH + 5 H(+)(in) = a quinol + NAD(+) + 4 H(+)(out). NDH-1 shuttles electrons from NADH, via FMN and iron-sulfur (Fe-S) centers, to quinones in the respiratory chain. Couples the redox reaction to proton translocation (for every two electrons transferred, four hydrogen ions are translocated across the cytoplasmic membrane), and thus conserves the redox energy in a proton gradient. This is NADH-quinone oxidoreductase subunit B from Jannaschia sp. (strain CCS1).